Reading from the N-terminus, the 190-residue chain is Protein LIGHT-DEPENDENT SHORT HYPOCOTYLS 1 (190 aa).

The segment covering 1 to 26 (MDLISHQPNKNPNSSTQLTPPSSSRY) has biased composition (polar residues). 2 disordered regions span residues 1-28 (MDLI…RYEN) and 145-190 (GVSY…GATV). Residues 25-152 (RYENQKRRDW…ARGVSYEKKR (128 aa)) enclose the ALOG domain. Positions 150 to 154 (KKRKR) match the Nuclear localization signal motif. The span at 158–179 (QKPQTQPPLQLQQQQQQPQQGQ) shows a compositional bias: low complexity. Polar residues predominate over residues 180-190 (SMMANYSGATV).

Belongs to the plant homeotic and developmental regulators ALOG protein family. Expressed in hypocotyls, shoot apices and lateral root primordia and, weakly, in vascular tissues.

It localises to the nucleus. In terms of biological role, probable transcription regulator that acts as a developmental regulator by promoting cell growth in response to continuous red (cR), far-red (cFR) and blue (cB) light in a phytochrome-dependent manner, at least during seedling development. This chain is Protein LIGHT-DEPENDENT SHORT HYPOCOTYLS 1 (LSH1), found in Arabidopsis thaliana (Mouse-ear cress).